We begin with the raw amino-acid sequence, 243 residues long: Probable transcriptional regulatory protein Bpet3099 (243 aa).

The tract at residues 1–21 is disordered; it reads MAGHSKWANIQHRKGRQDAKR.

Belongs to the TACO1 family.

The protein localises to the cytoplasm. The sequence is that of Probable transcriptional regulatory protein Bpet3099 from Bordetella petrii (strain ATCC BAA-461 / DSM 12804 / CCUG 43448).